Consider the following 104-residue polypeptide: Probable guanidinium efflux system subunit GdnD (104 aa).

4 helical membrane passes run 3-23, 31-51, 58-78, and 84-104; these read WICLIAAGILEMLGVTMMNQF, WIFLLIIGFAASFFLLSLAME, AYAVWTGIGTVGGALVGILFY, and GKRIFFIALILGSAVGLKLIS.

This sequence belongs to the drug/metabolite transporter (DMT) superfamily. Small multidrug resistance (SMR) (TC 2.A.7.1) family. YkkC/YkkD subfamily. In terms of assembly, the efflux pump is composed of GdnC and GdnD.

It is found in the cell membrane. Functionally, probably involved in guanidinium transport. The protein is Probable guanidinium efflux system subunit GdnD of Bacillus licheniformis (strain ATCC 14580 / DSM 13 / JCM 2505 / CCUG 7422 / NBRC 12200 / NCIMB 9375 / NCTC 10341 / NRRL NRS-1264 / Gibson 46).